We begin with the raw amino-acid sequence, 190 residues long: MAEKTQKSVKIAPGAVVCVESEIRGDVTIGPRTVIHPKARIIAEAGPIVIGEGNLIEEQALIINAHPDNITPDAEDSEPKPMIIGTNNVFEVGCYSQAMKMGDNNVIESKAYVGRNVILTSGCIIGACCNLNTFEVIPENTVIYGADCLRRVQTERPQPQTLQLDFLMKILPNYHHLKKTMKGSSTPVKN.

Residue T186 is modified to Phosphothreonine.

This sequence belongs to the dynactin subunits 5/6 family. Dynactin subunit 6 subfamily. Subunit of dynactin, a multiprotein complex part of a tripartite complex with dynein and a adapter, such as BICDL1, BICD2 or HOOK3. The dynactin complex is built around ACTR1A/ACTB filament and consists of an actin-related filament composed of a shoulder domain, a pointed end and a barbed end. Its length is defined by its flexible shoulder domain. The soulder is composed of 2 DCTN1 subunits, 4 DCTN2 and 2 DCTN3. The 4 DCNT2 (via N-terminus) bind the ACTR1A filament and act as molecular rulers to determine the length. The pointed end is important for binding dynein-dynactin cargo adapters. Consists of 4 subunits: ACTR10, DCNT4, DCTN5 and DCTN6. Within the complex DCTN6 forms a heterodimer with DCTN5. The barbed end is composed of a CAPZA1:CAPZB heterodimers, which binds ACTR1A/ACTB filament and dynactin and stabilizes dynactin. Interacts with PLK1. Interacts with N4BP2L1. In terms of processing, phosphorylation at Thr-186 by CDK1 during mitotic prometaphase creates a binding site for PLK1 that facilitates its recruitment to kinetochores.

It localises to the cytoplasm. It is found in the cytoskeleton. The protein resides in the chromosome. Its subcellular location is the centromere. The protein localises to the kinetochore. Part of the dynactin complex that activates the molecular motor dynein for ultra-processive transport along microtubules. The sequence is that of Dynactin subunit 6 (DCTN6) from Sus scrofa (Pig).